The sequence spans 262 residues: Ribosomal RNA small subunit methyltransferase A (262 aa).

Positions 16, 18, 43, 64, 89, and 109 each coordinate S-adenosyl-L-methionine.

This sequence belongs to the class I-like SAM-binding methyltransferase superfamily. rRNA adenine N(6)-methyltransferase family. RsmA subfamily.

It is found in the cytoplasm. It carries out the reaction adenosine(1518)/adenosine(1519) in 16S rRNA + 4 S-adenosyl-L-methionine = N(6)-dimethyladenosine(1518)/N(6)-dimethyladenosine(1519) in 16S rRNA + 4 S-adenosyl-L-homocysteine + 4 H(+). Its function is as follows. Specifically dimethylates two adjacent adenosines (A1518 and A1519) in the loop of a conserved hairpin near the 3'-end of 16S rRNA in the 30S particle. May play a critical role in biogenesis of 30S subunits. This Xanthomonas campestris pv. campestris (strain 8004) protein is Ribosomal RNA small subunit methyltransferase A.